The primary structure comprises 643 residues: UPF0313 protein CLD_0573 (643 aa).

Positions 295–566 (AIKEVKFSIT…RMQRALLQFS (272 aa)) constitute a Radical SAM core domain. The [4Fe-4S] cluster site is built by Cys-309, Cys-313, and Cys-316. Residues 598 to 643 (NKPYKKSHKKNNAKNNNNHYNKNNNKNKDISKKNKKNSLSKHKKRK) are disordered. Positions 600–609 (PYKKSHKKNN) are enriched in basic residues. Residues 610–621 (AKNNNNHYNKNN) show a composition bias toward low complexity. The span at 630–643 (KNKKNSLSKHKKRK) shows a compositional bias: basic residues.

It belongs to the UPF0313 family. [4Fe-4S] cluster serves as cofactor.

The sequence is that of UPF0313 protein CLD_0573 from Clostridium botulinum (strain Okra / Type B1).